The sequence spans 802 residues: Elongation factor G, mitochondrial (802 aa).

The N-terminal 24 residues, Met1–Leu24, are a transit peptide targeting the mitochondrion. The 288-residue stretch at Ser100–Ser387 folds into the tr-type G domain. Residues Ala109–Thr116, Asp185–His189, and Asn239–Asp242 contribute to the GTP site.

The protein belongs to the TRAFAC class translation factor GTPase superfamily. Classic translation factor GTPase family. EF-G/EF-2 subfamily.

It is found in the mitochondrion. It functions in the pathway protein biosynthesis; polypeptide chain elongation. Mitochondrial GTPase that catalyzes the GTP-dependent ribosomal translocation step during translation elongation. During this step, the ribosome changes from the pre-translocational (PRE) to the post-translocational (POST) state as the newly formed A-site-bound peptidyl-tRNA and P-site-bound deacylated tRNA move to the P and E sites, respectively. Catalyzes the coordinated movement of the two tRNA molecules, the mRNA and conformational changes in the ribosome. The sequence is that of Elongation factor G, mitochondrial (mef1) from Aspergillus terreus (strain NIH 2624 / FGSC A1156).